The primary structure comprises 834 residues: Enhancer of filamentation 1 (834 aa).

Residues 3–65 (ARNLMARALY…PGNRVKLLIG (63 aa)) form the SH3 domain. Phosphotyrosine occurs at positions 92, 164, 166, 177, 189, 214, and 223. A Phosphoserine modification is found at serine 296. Tyrosine 317 bears the Phosphotyrosine mark. Disordered regions lie at residues 328–402 (PPAE…DKRL) and 584–624 (SQMP…SERS). Residues 332–344 (TSEKANPEERDGV) show a composition bias toward basic and acidic residues. Residues 360–363 (DVVD) carry the Caspase cleavage related site motif. The span at 368-397 (LSFSSTGSTRSNMSTSSTTSKESSVSASPS) shows a compositional bias: low complexity. A Phosphoserine modification is found at serine 369. Positions 710-760 (FYYDQCETHYISLLNAIDALFSCVSSAQPPRIFVAHSKFVILSAHKLVFIG) are divergent helix-loop-helix motif. The interval 710-834 (FYYDQCETHY…KRSLLEMATF (125 aa)) is required for interaction with PLK1. Serine 780 carries the post-translational modification Phosphoserine. The residue at position 804 (threonine 804) is a Phosphothreonine.

Belongs to the CAS family. As to quaternary structure, homodimer. Forms heterodimers with BCAR1/p130cas. Forms complexes with PTK2B/RAFTK, adapter protein CRKL and LYN kinase. Part of a complex composed of NEDD9, AURKA and CTTN; within the complex NEDD9 acts as a scaffold protein and is required for complex formation. Part of a ternary complex composed of SMAD3, ITCH/AIP4 and NEDD9/HEF1; within the complex NEDD9/HEF1 interacts (via N-terminus) with ITCH/AIP4; the complex mediates ubiquitination and proteasomal degradation of NEDD9/HEF1. Interacts with ID2. Interacts with CTTN (via N-terminus). Interacts with MICAL. Interacts with TXNL4/DIM1. Interacts with BCAR3 (via Ras-GEF domain). Interacts with SH2D3C isoform 1 and isoform 2. Interacts with BCAR3. Interacts with ECT2. Interacts with PTPN11/SHP-2 (via SH2 domains); the interaction is enhanced when NEDD9/CAS-L is tyrosine phosphorylated. Interacts (via C-terminus) with PLK1 (via polo box domain). Interacts with NKX2-5. Interacts with SMAD3; the interaction is inhibited by oxidation of NEDD9. Interacts with ABL1; interaction is induced by CXCL12-mediated phosphorylation of NEDD/HEF1. Interacts (via SH3 domain) with PTK2/FAK. Interacts with FYN; in the presence of PTK2. Interacts with INPPL1/SHIP2. Post-translationally, polyubiquitinated by ITCH/AIP4, leading to proteasomal degradation. In terms of processing, PTK2/FAK1 phosphorylates the protein at the YDYVHL motif (conserved among all cas proteins) following integrin stimulation. The SRC family kinases (FYN, SRC, LCK and CRK) are recruited to the phosphorylated sites and can phosphorylate other tyrosine residues. Ligation of either integrin beta-1 or B-cell antigen receptor on tonsillar B-cells and B-cell lines promotes tyrosine phosphorylation and both integrin and BCR-mediated tyrosine phosphorylation requires an intact actin network. Phosphorylation is required to recruit NEDD9 to T-cell receptor microclusters at the periphery of newly formed immunological synapses. In fibroblasts transformation with oncogene v-ABL results in an increase in tyrosine phosphorylation. Transiently phosphorylated following CD3 cross-linking and this phosphorylated form binds to CRKL and C3G. A mutant lacking the SH3 domain is phosphorylated upon CD3 cross-linking but not upon integrin beta-1 cross-linking. Tyrosine phosphorylation occurs upon stimulation of the G-protein coupled C1a calcitonin receptor. Calcitonin-stimulated tyrosine phosphorylation is mediated by calcium- and protein kinase C-dependent mechanisms and requires the integrity of the actin cytoskeleton. Phosphorylation at Ser-369 induces proteasomal degradation. Phosphorylated by LYN. Phosphorylation at Ser-780 by CSNK1D or CSNK1E, or phosphorylation of Thr-804 by CSNK1E enhances the interaction of NEDD9 with PLK1.

The protein localises to the cytoplasm. It localises to the cell cortex. It is found in the nucleus. Its subcellular location is the golgi apparatus. The protein resides in the cell projection. The protein localises to the lamellipodium. It localises to the cell junction. It is found in the focal adhesion. Its subcellular location is the cytoskeleton. The protein resides in the spindle pole. The protein localises to the cilium. It localises to the cilium basal body. It is found in the basolateral cell membrane. Its function is as follows. Negatively regulates embryonic fibroblast migration. May play an important role in integrin beta-1 or B cell antigen receptor (BCR) mediated signaling in B- and T-cells. Integrin beta-1 stimulation leads to recruitment of various proteins including CRKl and SHPTP2 to the tyrosine phosphorylated form. Promotes adhesion and migration of lymphocytes; as a result required for the correct migration of lymphocytes to the spleen and other secondary lymphoid organs. Plays a role in the organization of T-cell F-actin cortical cytoskeleton and the centralization of T-cell receptor microclusters at the immunological synapse. Negatively regulates cilia outgrowth in polarized cysts. Modulates cilia disassembly via activation of AURKA-mediated phosphorylation of HDAC6 and subsequent deacetylation of alpha-tubulin. In conjunction with NKX2-5, positively regulates transcription of genes such as COL3A1 and MMP2, resulting in increased pulmonary endothelial fibrosis in response to hypoxia. Positively regulates RANKL-induced osteoclastogenesis. Required for the maintenance of hippocampal dendritic spines in the dentate gyrus and CA1 regions, thereby involved in spatial learning and memory. This Canis lupus familiaris (Dog) protein is Enhancer of filamentation 1.